The following is a 706-amino-acid chain: Protein psiG (706 aa).

Positions 1 to 23 (MKIILTLLIILFSLNKNLNFVSS) are cleaved as a signal peptide. Residues 24 to 644 (EVTKSRICSI…FVCKPAAIIS (621 aa)) lie on the Extracellular side of the membrane. N-linked (GlcNAc...) asparagine glycosylation is found at asparagine 95, asparagine 107, asparagine 212, asparagine 296, asparagine 429, asparagine 521, asparagine 532, and asparagine 616. Positions 109–253 (TLDKSSNIYS…SDYCGVCQGD (145 aa)) constitute a PA14 domain. Residues 645-665 (TSVIVGVSVAAAVVAIAIVVA) traverse the membrane as a helical segment. Residues 666–706 (SKKGYDAWAASNNNSLASLTSNPLYENPTGNGDNPMYQPNS) are Cytoplasmic-facing. The tract at residues 687–706 (NPLYENPTGNGDNPMYQPNS) is disordered. Polar residues predominate over residues 693-706 (PTGNGDNPMYQPNS).

The protein belongs to the prespore-cell-inducing factor family.

It is found in the membrane. The chain is Protein psiG (psiG-1) from Dictyostelium discoideum (Social amoeba).